We begin with the raw amino-acid sequence, 272 residues long: 3-methyl-2-oxobutanoate hydroxymethyltransferase (272 aa).

2 residues coordinate Mg(2+): D51 and D90. 3-methyl-2-oxobutanoate is bound by residues D51–S52, D90, and K118. E120 lines the Mg(2+) pocket. E187 acts as the Proton acceptor in catalysis.

This sequence belongs to the PanB family. In terms of assembly, homodecamer; pentamer of dimers. Requires Mg(2+) as cofactor.

The protein resides in the cytoplasm. It catalyses the reaction 3-methyl-2-oxobutanoate + (6R)-5,10-methylene-5,6,7,8-tetrahydrofolate + H2O = 2-dehydropantoate + (6S)-5,6,7,8-tetrahydrofolate. It participates in cofactor biosynthesis; (R)-pantothenate biosynthesis; (R)-pantoate from 3-methyl-2-oxobutanoate: step 1/2. Its function is as follows. Catalyzes the reversible reaction in which hydroxymethyl group from 5,10-methylenetetrahydrofolate is transferred onto alpha-ketoisovalerate to form ketopantoate. The polypeptide is 3-methyl-2-oxobutanoate hydroxymethyltransferase (Xylella fastidiosa (strain M23)).